A 205-amino-acid chain; its full sequence is Thiamine-phosphate synthase (205 aa).

4-amino-2-methyl-5-(diphosphooxymethyl)pyrimidine contacts are provided by residues 36 to 40 (QYRRK) and Asp68. Mg(2+) contacts are provided by Asp69 and Asp88. Ser106 serves as a coordination point for 4-amino-2-methyl-5-(diphosphooxymethyl)pyrimidine. 132-134 (SPT) contacts 2-[(2R,5Z)-2-carboxy-4-methylthiazol-5(2H)-ylidene]ethyl phosphate. Lys135 serves as a coordination point for 4-amino-2-methyl-5-(diphosphooxymethyl)pyrimidine. Residues Gly162 and 182–183 (IS) contribute to the 2-[(2R,5Z)-2-carboxy-4-methylthiazol-5(2H)-ylidene]ethyl phosphate site.

The protein belongs to the thiamine-phosphate synthase family. Requires Mg(2+) as cofactor.

It catalyses the reaction 2-[(2R,5Z)-2-carboxy-4-methylthiazol-5(2H)-ylidene]ethyl phosphate + 4-amino-2-methyl-5-(diphosphooxymethyl)pyrimidine + 2 H(+) = thiamine phosphate + CO2 + diphosphate. The catalysed reaction is 2-(2-carboxy-4-methylthiazol-5-yl)ethyl phosphate + 4-amino-2-methyl-5-(diphosphooxymethyl)pyrimidine + 2 H(+) = thiamine phosphate + CO2 + diphosphate. The enzyme catalyses 4-methyl-5-(2-phosphooxyethyl)-thiazole + 4-amino-2-methyl-5-(diphosphooxymethyl)pyrimidine + H(+) = thiamine phosphate + diphosphate. The protein operates within cofactor biosynthesis; thiamine diphosphate biosynthesis; thiamine phosphate from 4-amino-2-methyl-5-diphosphomethylpyrimidine and 4-methyl-5-(2-phosphoethyl)-thiazole: step 1/1. Functionally, condenses 4-methyl-5-(beta-hydroxyethyl)thiazole monophosphate (THZ-P) and 2-methyl-4-amino-5-hydroxymethyl pyrimidine pyrophosphate (HMP-PP) to form thiamine monophosphate (TMP). This Caldivirga maquilingensis (strain ATCC 700844 / DSM 13496 / JCM 10307 / IC-167) protein is Thiamine-phosphate synthase.